The chain runs to 118 residues: MRTKIELGKLGENLAADFLERRGFRIVDTNWRCPSGEIDLVAFDGEFLVIAEVKARRSLRYGHPFEAITDAKLRRLRTLAVLWARHHGFFSSPIRIDAVAVLIPQGEEPRLEHLRGLG.

The protein belongs to the UPF0102 family.

The polypeptide is UPF0102 protein RSal33209_1090 (Renibacterium salmoninarum (strain ATCC 33209 / DSM 20767 / JCM 11484 / NBRC 15589 / NCIMB 2235)).